The following is a 243-amino-acid chain: DNA repair protein RecO (243 aa).

Belongs to the RecO family.

In terms of biological role, involved in DNA repair and RecF pathway recombination. In Xylella fastidiosa (strain M23), this protein is DNA repair protein RecO.